The following is a 1245-amino-acid chain: ABC transporter B family member 13 (1245 aa).

A compositionally biased stretch (polar residues) spans 1–14 (MDNTERSSNGNIQA). The interval 1–20 (MDNTERSSNGNIQAETEAKE) is disordered. The region spanning 47–336 (MLLGGLGACI…AAPSLSAIAK (290 aa)) is the ABC transmembrane type-1 1 domain. Residues 48-68 (LLGGLGACIHGATLPLFFVFF) form a helical membrane-spanning segment. N-linked (GlcNAc...) asparagine glycosylation is present at Asn-77. 5 helical membrane-spanning segments follow: residues 94-114 (LYLV…VSCW), 171-191 (HVLR…LSVW), 195-215 (LLTL…AIVM), 276-296 (LGVG…LWYA), and 314-334 (ILNV…LSAI). N-linked (GlcNAc...) asparagine glycans are attached at residues Asn-351 and Asn-391. In terms of domain architecture, ABC transporter 1 spans 372-607 (IEFQKVSFAY…GGDYATLVNC (236 aa)). ATP is bound at residue 406 to 413 (GPSGSGKS). The segment covering 610–629 (TEPQENSRSIMSETCKSQAG) has biased composition (polar residues). The interval 610-660 (TEPQENSRSIMSETCKSQAGSSSSRRVSSSRRTSSFRVDQEKTKNDDSKKD) is disordered. Low complexity predominate over residues 630 to 646 (SSSSRRVSSSRRTSSFR). The segment covering 647 to 660 (VDQEKTKNDDSKKD) has biased composition (basic and acidic residues). The ABC transmembrane type-1 2 domain occupies 681 to 969 (ALLGSIGAVL…TLALTPDIVK (289 aa)). 2 helical membrane-spanning segments follow: residues 686-706 (IGAV…AYVL) and 725-745 (AIIF…QHYF). An N-linked (GlcNAc...) asparagine glycan is attached at Asn-778. The next 4 membrane-spanning stretches (helical) occupy residues 805–822 (IVQN…AFFY), 828–848 (AVVT…QLFL), 913–933 (LSQF…SVLI), and 947–967 (FMVL…TPDI). Residues 1004-1240 (IEFRNVSFVY…PNGFYKQLTS (237 aa)) form the ABC transporter 2 domain. An N-linked (GlcNAc...) asparagine glycan is attached at Asn-1008. 1039 to 1046 (GPSGSGKS) contacts ATP. The N-linked (GlcNAc...) asparagine glycan is linked to Asn-1106.

This sequence belongs to the ABC transporter superfamily. ABCB family. Multidrug resistance exporter (TC 3.A.1.201) subfamily.

The protein localises to the membrane. This is ABC transporter B family member 13 (ABCB13) from Arabidopsis thaliana (Mouse-ear cress).